Here is a 211-residue protein sequence, read N- to C-terminus: Octanoyltransferase (211 aa).

The 176-residue stretch at 28–203 folds into the BPL/LPL catalytic domain; that stretch reads GSAPETLLLV…HFQSLLKTWL (176 aa). Substrate-binding positions include 66 to 73, 133 to 135, and 146 to 148; these read RGGDITYH, SIG, and GFA. Cysteine 164 (acyl-thioester intermediate) is an active-site residue.

It belongs to the LipB family.

It is found in the cytoplasm. The catalysed reaction is octanoyl-[ACP] + L-lysyl-[protein] = N(6)-octanoyl-L-lysyl-[protein] + holo-[ACP] + H(+). It participates in protein modification; protein lipoylation via endogenous pathway; protein N(6)-(lipoyl)lysine from octanoyl-[acyl-carrier-protein]: step 1/2. In terms of biological role, catalyzes the transfer of endogenously produced octanoic acid from octanoyl-acyl-carrier-protein onto the lipoyl domains of lipoate-dependent enzymes. Lipoyl-ACP can also act as a substrate although octanoyl-ACP is likely to be the physiological substrate. The polypeptide is Octanoyltransferase (Syntrophotalea carbinolica (strain DSM 2380 / NBRC 103641 / GraBd1) (Pelobacter carbinolicus)).